The chain runs to 202 residues: Cryptic protein (202 aa).

An N-terminal signal peptide occupies residues 1–35; the sequence is MRANSPTQGISLKMHQARPLFLVTVALQLIGLGYS. Asn-65 carries an N-linked (GlcNAc...) asparagine glycan. One can recognise an EGF-like domain in the interval 94-123; the sequence is PVSRCCHNGGTCVLGSFCVCPAYFTGRYCE. 3 cysteine pairs are disulfide-bonded: Cys-98-Cys-105, Cys-99-Cys-111, and Cys-113-Cys-122. Asp-166 is lipidated: GPI-anchor amidated aspartate. The propeptide at 167–202 is removed in mature form; it reads LKSFLSSGARGSRECSIPSLLLLVLCLLLQGVAGKG.

Belongs to the EGF-CFC (Cripto-1/FRL1/Cryptic) family. Post-translationally, N-glycosylated. In terms of tissue distribution, no expressed in adult tissues.

The protein resides in the cell membrane. The protein localises to the secreted. Its function is as follows. Nodal coreceptor involved in the correct establishment of the left-right axis. May play a role in mesoderm and/or neural patterning during gastrulation. In Mus musculus (Mouse), this protein is Cryptic protein (Cfc1).